The primary structure comprises 427 residues: Glutamate-1-semialdehyde 2,1-aminomutase (427 aa).

Lys-267 bears the N6-(pyridoxal phosphate)lysine mark.

This sequence belongs to the class-III pyridoxal-phosphate-dependent aminotransferase family. HemL subfamily. Homodimer. Pyridoxal 5'-phosphate is required as a cofactor.

It localises to the cytoplasm. The enzyme catalyses (S)-4-amino-5-oxopentanoate = 5-aminolevulinate. It participates in porphyrin-containing compound metabolism; protoporphyrin-IX biosynthesis; 5-aminolevulinate from L-glutamyl-tRNA(Glu): step 2/2. The protein is Glutamate-1-semialdehyde 2,1-aminomutase of Geobacter metallireducens (strain ATCC 53774 / DSM 7210 / GS-15).